A 69-amino-acid polypeptide reads, in one-letter code: Large ribosomal subunit protein uL29 (69 aa).

It belongs to the universal ribosomal protein uL29 family.

In Lachnoclostridium phytofermentans (strain ATCC 700394 / DSM 18823 / ISDg) (Clostridium phytofermentans), this protein is Large ribosomal subunit protein uL29.